The primary structure comprises 868 residues: Pro-neuregulin-2, membrane-bound isoform (868 aa).

Residues 1-114 (MRQVCCSALP…AAGGMRRDPA (114 aa)) form a disordered region. Residues 1 to 127 (MRQVCCSALP…SMLLFGVSLA (127 aa)) constitute a propeptide that is removed on maturation. Over residues 19-75 (SSYSYSDSSSSSSSNNSSSSTSSRSSSRSSSRSSRGSTTTTSSSENSGSNSGSIFRP) the composition is skewed to low complexity. Asn33 and Asn34 each carry an N-linked (GlcNAc...) asparagine glycan. Residues 76 to 90 (AAPPEPRPQPQPQPR) are compositionally biased toward pro residues. Positions 91-108 (SPAARRAAARSRAAAAGG) are enriched in low complexity. The Extracellular portion of the chain corresponds to 128-429 (CYSPSLKSVQ…KEAEELYQKR (302 aa)). Asn163, Asn294, and Asn362 each carry an N-linked (GlcNAc...) asparagine glycan. Positions 253–348 (PKLKKMKSQT…RGRLHVNSVS (96 aa)) constitute an Ig-like C2-type domain. 4 cysteine pairs are disulfide-bonded: Cys273–Cys327, Cys361–Cys375, Cys369–Cys386, and Cys388–Cys397. The EGF-like domain maps to 357–398 (HARKCNETAKSYCVNGGVCYYIEGINQLSCKCPNGFFGQRCL). The chain crosses the membrane as a helical span at residues 430–450 (VLTITGICVALLVVGIVCVVA). At 451-868 (YCKTKKQRRQ…TRAKQDSGPL (418 aa)) the chain is on the cytoplasmic side. Disordered stretches follow at residues 469-488 (MCPAHQNRSLANGPSHPRLD), 516-553 (TFSGSHSCSPSHHCSTATPTSSHRHESHTWSLERSESL), 671-690 (LLRHPAPPGPGPGPGADMQR), 720-806 (ASPF…DGAL), and 823-868 (LRSD…SGPL). The segment covering 518 to 530 (SGSHSCSPSHHCS) has biased composition (low complexity). A compositionally biased stretch (basic and acidic residues) spans 538-551 (HRHESHTWSLERSE). Residues 766–794 (LNGLAAQRARAARDSLSLSSGSGCGSASA) show a composition bias toward low complexity.

Belongs to the neuregulin family. In terms of assembly, interacts with ERBB3 and ERBB4. Proteolytic cleavage close to the plasma membrane on the external face leads to the release of the soluble growth factor form. Post-translationally, extensive glycosylation precedes the proteolytic cleavage. As to expression, expressed in most parts of the brain, especially the olfactory bulb and cerebellum where it localizes in granule and Purkinje cells. In the hippocampus, found in the granule cells of the dentate gyrus. In the basal forebrain, found in the cholinergic cells. In the hindbrain, weakly detectable in the motor trigeminal nucleus. Not detected in the hypothalamus. Also found in the liver and in the thymus. Not detected in heart, adrenal gland, or testis.

It is found in the cell membrane. Its subcellular location is the secreted. Functionally, direct ligand for ERBB3 and ERBB4 tyrosine kinase receptors. Concomitantly recruits ERBB1 and ERBB2 coreceptors, resulting in ligand-stimulated tyrosine phosphorylation and activation of the ERBB receptors. May also promote the heterodimerization with the EGF receptor. This Rattus norvegicus (Rat) protein is Pro-neuregulin-2, membrane-bound isoform (Nrg2).